The chain runs to 216 residues: Gamma-glutamylcyclotransferase 2-1 (216 aa).

5-10 (VFGYGS) is a binding site for substrate. The Proton acceptor role is filled by Glu87.

This sequence belongs to the gamma-glutamylcyclotransferase family. The cofactor is Mn(2+). In terms of tissue distribution, expressed in the central vascular bundle of roots, leaf veins, hydathodes, cauline leaves, shoot apex, sepal veins, flower receptacles and developing seeds.

The protein localises to the cytoplasm. It catalyses the reaction an alpha-(gamma-L-glutamyl)-L-amino acid = 5-oxo-L-proline + an L-alpha-amino acid. In terms of biological role, catalyzes the formation of 5-oxoproline from gamma-glutamyl dipeptides and plays a significant role in glutathione (GSH) homeostasis. Converts both GSH and gamma-glutamyl-L-alanine to 5-oxoproline in vitro. Plays a role in detoxification of heavy metals and metalloids by recycling glutamate and maintaining GSH homeostasis. The protein is Gamma-glutamylcyclotransferase 2-1 of Arabidopsis thaliana (Mouse-ear cress).